A 434-amino-acid chain; its full sequence is Putative MgpC-like protein MPN_149 (434 aa).

Disordered regions lie at residues 168-193 (GSGQ…PKAV) and 215-267 (EPLD…DNNG). Positions 170–184 (GQESSWNSQRSQKVL) are enriched in polar residues. Over residues 218 to 229 (DSTKDGKGKDES) the composition is skewed to basic and acidic residues. Residues 248 to 267 (STGSQMAAVTDSQQSGDNNG) are compositionally biased toward polar residues.

Belongs to the MgpC family.

The chain is Putative MgpC-like protein MPN_149 from Mycoplasma pneumoniae (strain ATCC 29342 / M129 / Subtype 1) (Mycoplasmoides pneumoniae).